The sequence spans 408 residues: Neutral cholesterol ester hydrolase 1 (408 aa).

The Cytoplasmic segment spans residues 1–4; sequence MRSS. A helical; Signal-anchor for type II membrane protein membrane pass occupies residues 5 to 25; that stretch reads CVLLAALLALVAYYVYIPLPS. Over 26-408 the chain is Lumenal; that stretch reads AVSDPWKLML…SYFKWLDQNL (383 aa). The Involved in the stabilization of the negatively charged intermediate by the formation of the oxyanion hole motif lies at 113–115; sequence HGG. Residue S191 is part of the active site. The N-linked (GlcNAc...) asparagine glycan is linked to N270. The active site involves D348. N367 is a glycosylation site (N-linked (GlcNAc...) asparagine). The active site involves H378. N-linked (GlcNAc...) asparagine glycosylation occurs at N389.

It belongs to the 'GDXG' lipolytic enzyme family. N-glycosylated.

It localises to the cell membrane. The protein resides in the microsome. The catalysed reaction is a 1-O-alkyl-2-acetyl-sn-glycerol + H2O = a 1-O-alkyl-sn-glycerol + acetate + H(+). It carries out the reaction 1-O-hexadecyl-2-acetyl-sn-glycerol + H2O = 1-O-hexadecyl-sn-glycerol + acetate + H(+). It catalyses the reaction a cholesterol ester + H2O = cholesterol + a fatty acid + H(+). The enzyme catalyses cholesteryl (9Z-octadecenoate) + H2O = cholesterol + (9Z)-octadecenoate + H(+). Functionally, hydrolyzes 2-acetyl monoalkylglycerol ether (1-O-alkyl-2-acetyl-sn-glycerol), the penultimate precursor of the pathway for de novo synthesis of platelet-activating factor. May be responsible for the hydrolysis of cholesterol esters (such as cholesteryl (9Z-octadecenoate)) in macrophages. Also involved in organ detoxification by hydrolyzing exogenous organophosphorus compounds. In Rattus norvegicus (Rat), this protein is Neutral cholesterol ester hydrolase 1 (Nceh1).